Reading from the N-terminus, the 359-residue chain is Alkanal monooxygenase alpha chain (359 aa).

The protein belongs to the bacterial luciferase oxidoreductase family. In terms of assembly, heterodimer of an alpha and a beta chain.

It carries out the reaction a long-chain fatty aldehyde + FMNH2 + O2 = a long-chain fatty acid + hnu + FMN + H2O + 2 H(+). Light-emitting reaction in luminous bacteria. The polypeptide is Alkanal monooxygenase alpha chain (luxA) (Photorhabdus laumondii subsp. laumondii (strain DSM 15139 / CIP 105565 / TT01) (Photorhabdus luminescens subsp. laumondii)).